We begin with the raw amino-acid sequence, 280 residues long: MMDTKTKLLGLIGHPVDHSFSPIMHNTAIEDLGINYVYLAFDVSEENLKNVVSGAKALQITGFNVTIPHKINIMKYLDEIDEDAKAIGAVNTVKIENGKAIGYNTDGIGAKRTLEEKAGILIDKNILIIGSGGASRAVCFELAKDNNLTIINRNIEKAKILSEEFSKKLKKQKPINYGDLDLDIKNFDIILNTTPVGMHPNTNVDPVIPLKNIKKDAVVMDLIYNPIEPVFLKEAIKYGAKTINGLGMLVYQGAVSFEIWTGMKPDIYVMKKAINSKIRL.

Residues 19–21 (SFS) and Thr-66 contribute to the shikimate site. The active-site Proton acceptor is the Lys-70. Residue Glu-82 participates in NADP(+) binding. Residues Asn-91 and Asp-106 each coordinate shikimate. NADP(+)-binding positions include 130–134 (GSGGA) and Leu-222. Tyr-224 contacts shikimate. Gly-245 lines the NADP(+) pocket.

It belongs to the shikimate dehydrogenase family. Homodimer.

The enzyme catalyses shikimate + NADP(+) = 3-dehydroshikimate + NADPH + H(+). It participates in metabolic intermediate biosynthesis; chorismate biosynthesis; chorismate from D-erythrose 4-phosphate and phosphoenolpyruvate: step 4/7. Functionally, involved in the biosynthesis of the chorismate, which leads to the biosynthesis of aromatic amino acids. Catalyzes the reversible NADPH linked reduction of 3-dehydroshikimate (DHSA) to yield shikimate (SA). This Methanococcus maripaludis (strain C7 / ATCC BAA-1331) protein is Shikimate dehydrogenase (NADP(+)).